A 283-amino-acid chain; its full sequence is ATP phosphoribosyltransferase (283 aa).

It belongs to the ATP phosphoribosyltransferase family. Long subfamily. Requires Mg(2+) as cofactor.

Its subcellular location is the cytoplasm. It catalyses the reaction 1-(5-phospho-beta-D-ribosyl)-ATP + diphosphate = 5-phospho-alpha-D-ribose 1-diphosphate + ATP. It participates in amino-acid biosynthesis; L-histidine biosynthesis; L-histidine from 5-phospho-alpha-D-ribose 1-diphosphate: step 1/9. Feedback inhibited by histidine. In terms of biological role, catalyzes the condensation of ATP and 5-phosphoribose 1-diphosphate to form N'-(5'-phosphoribosyl)-ATP (PR-ATP). Has a crucial role in the pathway because the rate of histidine biosynthesis seems to be controlled primarily by regulation of HisG enzymatic activity. In Bifidobacterium longum (strain DJO10A), this protein is ATP phosphoribosyltransferase.